We begin with the raw amino-acid sequence, 717 residues long: Transport/processing ATP-binding protein ComA (717 aa).

Positions 11 to 138 (QVDQMDCGVA…EEWTGVTLFM (128 aa)) constitute a Peptidase C39 domain. C17 is an active-site residue. The next 7 membrane-spanning stretches (helical) occupy residues 18–38 (GVAS…LAHL), 166–186 (GLIA…IVGS), 205–225 (LGII…LSYA), 237–257 (LSID…MSFF), 281–301 (STIL…LVLF), 306–326 (NLFF…FAFM), and 397–417 (VAHL…VMDG). Residues 168 to 450 (IANIVLATLL…IINLQTKLQT (283 aa)) enclose the ABC transmembrane type-1 domain. The 234-residue stretch at 484-717 (MTFKQVHYKY…GGFYAHLVNS (234 aa)) folds into the ABC transporter domain. Residue 517–524 (GISGSGKT) participates in ATP binding.

The protein belongs to the ABC transporter superfamily. HlyB family.

Its subcellular location is the cell membrane. In terms of biological role, required for induction of competence. Seems to transport the competence-stimulating peptide (CSP). The sequence is that of Transport/processing ATP-binding protein ComA (comA) from Streptococcus pneumoniae (strain ATCC BAA-255 / R6).